The sequence spans 210 residues: Thiamine-phosphate synthase (210 aa).

4-amino-2-methyl-5-(diphosphooxymethyl)pyrimidine-binding positions include 36–40 and Asn-68; that span reads QLRIK. 2 residues coordinate Mg(2+): Asp-69 and Asp-88. Ser-107 serves as a coordination point for 4-amino-2-methyl-5-(diphosphooxymethyl)pyrimidine. Residue 133–135 coordinates 2-[(2R,5Z)-2-carboxy-4-methylthiazol-5(2H)-ylidene]ethyl phosphate; sequence TQT. 4-amino-2-methyl-5-(diphosphooxymethyl)pyrimidine is bound at residue Lys-136. Residues Gly-165 and 185-186 contribute to the 2-[(2R,5Z)-2-carboxy-4-methylthiazol-5(2H)-ylidene]ethyl phosphate site; that span reads VS.

The protein belongs to the thiamine-phosphate synthase family. Requires Mg(2+) as cofactor.

It catalyses the reaction 2-[(2R,5Z)-2-carboxy-4-methylthiazol-5(2H)-ylidene]ethyl phosphate + 4-amino-2-methyl-5-(diphosphooxymethyl)pyrimidine + 2 H(+) = thiamine phosphate + CO2 + diphosphate. The enzyme catalyses 2-(2-carboxy-4-methylthiazol-5-yl)ethyl phosphate + 4-amino-2-methyl-5-(diphosphooxymethyl)pyrimidine + 2 H(+) = thiamine phosphate + CO2 + diphosphate. It carries out the reaction 4-methyl-5-(2-phosphooxyethyl)-thiazole + 4-amino-2-methyl-5-(diphosphooxymethyl)pyrimidine + H(+) = thiamine phosphate + diphosphate. The protein operates within cofactor biosynthesis; thiamine diphosphate biosynthesis; thiamine phosphate from 4-amino-2-methyl-5-diphosphomethylpyrimidine and 4-methyl-5-(2-phosphoethyl)-thiazole: step 1/1. Functionally, condenses 4-methyl-5-(beta-hydroxyethyl)thiazole monophosphate (THZ-P) and 2-methyl-4-amino-5-hydroxymethyl pyrimidine pyrophosphate (HMP-PP) to form thiamine monophosphate (TMP). This is Thiamine-phosphate synthase from Cronobacter sakazakii (strain ATCC BAA-894) (Enterobacter sakazakii).